The primary structure comprises 388 residues: MNVHEFQAKGILSGFDVRVPKGVVVRSVEEVDSALGSLAAGIVAVKAQIHAGGRGKAGGVKIGKAREEVADLVKSMLGSVLVTHQTSAAGQKVHAVYLEEGVSIKKEYYLGAVVDRKAGMVSVIFSSEGGMDIEEVAHSRPEMVVVVNVDPVYGFLDFHGRKLCYGLGLKKEQVVQITAMARKVCRALMETDASQVEINPLVETTCGEFIALDAKMTFDDNGLFRRPEIVKLTDPHEYSEEELEAAKYGLSYIKLDGNIGCMVNGAGLAMATMDIVKYYGGEPANFLDVGGGASKDTVREAFKIILRSGVDGILVNIFGGIMRCDVIAAGIIESAKEIGVSVPMVVRLSGTNYKIGKEMLDASGLSIVTAENLDEAARFVVDLVGKRG.

The ATP-grasp domain occupies 9-244 (KGILSGFDVR…PHEYSEEELE (236 aa)). Residues K46, 53 to 55 (GRG), E99, V102, and E107 each bind ATP. Residues N199 and D213 each coordinate Mg(2+). Substrate contacts are provided by residues N264 and 320-322 (GIM).

The protein belongs to the succinate/malate CoA ligase beta subunit family. Heterotetramer of two alpha and two beta subunits. Mg(2+) serves as cofactor.

It catalyses the reaction succinate + ATP + CoA = succinyl-CoA + ADP + phosphate. The enzyme catalyses GTP + succinate + CoA = succinyl-CoA + GDP + phosphate. It functions in the pathway carbohydrate metabolism; tricarboxylic acid cycle; succinate from succinyl-CoA (ligase route): step 1/1. Succinyl-CoA synthetase functions in the citric acid cycle (TCA), coupling the hydrolysis of succinyl-CoA to the synthesis of either ATP or GTP and thus represents the only step of substrate-level phosphorylation in the TCA. The beta subunit provides nucleotide specificity of the enzyme and binds the substrate succinate, while the binding sites for coenzyme A and phosphate are found in the alpha subunit. The protein is Succinate--CoA ligase [ADP-forming] subunit beta of Anaplasma phagocytophilum (strain HZ).